The primary structure comprises 307 residues: Small ribosomal subunit biogenesis GTPase RsgA (307 aa).

A disordered region spans residues 1–20; that stretch reads MPSEHPFSDGISTPNPKETM. Residues 10-20 show a composition bias toward polar residues; it reads GISTPNPKETM. The CP-type G domain maps to 85 to 242; that stretch reads RQDAWKTKLI…LIDSPGLQEF (158 aa). GTP contacts are provided by residues 135-138 and 184-192; these read NKAD and GQSGMGKST. C266, C271, H273, and C279 together coordinate Zn(2+).

This sequence belongs to the TRAFAC class YlqF/YawG GTPase family. RsgA subfamily. In terms of assembly, monomer. Associates with 30S ribosomal subunit, binds 16S rRNA. It depends on Zn(2+) as a cofactor.

Its subcellular location is the cytoplasm. Functionally, one of several proteins that assist in the late maturation steps of the functional core of the 30S ribosomal subunit. Helps release RbfA from mature subunits. May play a role in the assembly of ribosomal proteins into the subunit. Circularly permuted GTPase that catalyzes slow GTP hydrolysis, GTPase activity is stimulated by the 30S ribosomal subunit. This is Small ribosomal subunit biogenesis GTPase RsgA from Neisseria meningitidis serogroup A / serotype 4A (strain DSM 15465 / Z2491).